We begin with the raw amino-acid sequence, 299 residues long: Cell division control protein 16 (299 aa).

The region spanning 41 to 223 (GGNSSTRPYV…TIWDFLFAYG (183 aa)) is the Rab-GAP TBC domain.

It belongs to the BUB2 family.

Its subcellular location is the cytoplasm. The protein localises to the cytoskeleton. It is found in the microtubule organizing center. It localises to the spindle pole body. Its function is as follows. Has a dual role in the cell cycle. In mitosis, it is involved in maintenance of cdc2 kinase activity. It is subsequently required for regulation of septum formation. Could be involved in maintenance of cdc2 kinase activity by preventing, directly or indirectly, the degradation of cyclin or the dephosphorylation of 'Thr-167' of cdc2. The polypeptide is Cell division control protein 16 (cdc16) (Schizosaccharomyces pombe (strain 972 / ATCC 24843) (Fission yeast)).